Consider the following 277-residue polypeptide: Tryptophan synthase alpha chain (277 aa).

Residues Glu-50 and Asp-61 each act as proton acceptor in the active site.

This sequence belongs to the TrpA family. As to quaternary structure, tetramer of two alpha and two beta chains.

It catalyses the reaction (1S,2R)-1-C-(indol-3-yl)glycerol 3-phosphate + L-serine = D-glyceraldehyde 3-phosphate + L-tryptophan + H2O. It functions in the pathway amino-acid biosynthesis; L-tryptophan biosynthesis; L-tryptophan from chorismate: step 5/5. In terms of biological role, the alpha subunit is responsible for the aldol cleavage of indoleglycerol phosphate to indole and glyceraldehyde 3-phosphate. This Beijerinckia indica subsp. indica (strain ATCC 9039 / DSM 1715 / NCIMB 8712) protein is Tryptophan synthase alpha chain.